The following is a 367-amino-acid chain: Germination protease (367 aa).

The propeptide occupies M1 to D15.

The protein belongs to the peptidase A25 family. Homotetramer. Post-translationally, autoproteolytically processed. The inactive tetrameric zymogen termed p46 autoprocesses to a smaller form termed p41, which is active only during spore germination.

The catalysed reaction is Endopeptidase action with P4 Glu or Asp, P1 preferably Glu &gt; Asp, P1' hydrophobic and P2' Ala.. Functionally, initiates the rapid degradation of small, acid-soluble proteins during spore germination. In Bacillus cereus (strain AH187), this protein is Germination protease.